Here is a 501-residue protein sequence, read N- to C-terminus: Cytochrome P450 4d2 (501 aa).

Residues glutamate 311 and cysteine 449 each coordinate heme.

The protein belongs to the cytochrome P450 family. The cofactor is heme.

It localises to the endoplasmic reticulum membrane. The protein localises to the microsome membrane. Its function is as follows. Involved in the metabolism of insect hormones and in the breakdown of synthetic insecticides. This Drosophila melanogaster (Fruit fly) protein is Cytochrome P450 4d2 (Cyp4d2).